We begin with the raw amino-acid sequence, 610 residues long: Menin (610 aa).

Residues 214–390 (GVAERSWLYL…SLLEAGEERP (177 aa)) are interaction with FANCD2. Disordered stretches follow at residues 385–404 (AGEE…GSAL) and 460–552 (REAE…PVLT). Residues 393–402 (QTQGTQSQGS) show a composition bias toward low complexity. A compositionally biased stretch (basic and acidic residues) spans 484–500 (RRESKPEEPPPPKKPAL). Residue S487 is modified to Phosphoserine. Pro residues-rich tracts occupy residues 512 to 521 (PGPPRKPPGT) and 537 to 548 (VPAPAASPPPEG). S543 bears the Phosphoserine mark. Position 594 is a phosphothreonine (T594).

Component of the MLL-HCF complex, at least composed of KMT2A/MLL1, MEN1, ASH2L, RBBP5, DPY30, WDR5, HCFC1 and HCFC2. Component of the menin-associated histone methyltransferase complex, at least composed of KMT2B/MLL4, MEN1, ASH2L, RBBP5, DPY30 and WDR5. Interacts with POLR2B. Interacts with POLR2A phosphorylated at 'Ser-5', but not with the unphosphorylated, nor 'Ser-2' phosphorylated POLR2A forms. Interacts with FANCD2 and DBF4. Interacts with SMAD3, but not with SMAD2, nor SMAD4. Directly interacts with NFKB1, NFKB2 and RELA. Interacts with JUND (via MBM motif); inhibits the interaction of JUND with MAPK10 and the phosphorylation of JUND by MAP kinases MAPK8 and MAPK10. Interacts with KMT2A (via MBM motif). The KMT2A-MEN1 complex interacts with PSIP1 with a greater affinity as MEN1 enhances interaction of KMT2A with PSIP1.

It localises to the nucleus. Its function is as follows. Essential component of a MLL/SET1 histone methyltransferase (HMT) complex, a complex that specifically methylates 'Lys-4' of histone H3 (H3K4). Functions as a transcriptional regulator. Binds to the TERT promoter and represses telomerase expression. Plays a role in TGFB1-mediated inhibition of cell-proliferation, possibly regulating SMAD3 transcriptional activity. Represses JUND-mediated transcriptional activation on AP1 sites, as well as that mediated by NFKB subunit RELA. Positively regulates HOXC8 and HOXC6 gene expression. May be involved in normal hematopoiesis through the activation of HOXA9 expression. May be involved in DNA repair. The protein is Menin (MEN1) of Bos taurus (Bovine).